Here is a 57-residue protein sequence, read N- to C-terminus: Ribosome modulation factor (57 aa).

The segment at 1–28 (MKRQKRDRLERAQSQGYKAGLNGRSHDE) is disordered.

Belongs to the ribosome modulation factor family.

It localises to the cytoplasm. Functionally, during stationary phase, converts 70S ribosomes to an inactive dimeric form (100S ribosomes). The sequence is that of Ribosome modulation factor from Vibrio cholerae serotype O1 (strain MJ-1236).